The sequence spans 250 residues: Large ribosomal subunit protein uL30B (250 aa).

The protein belongs to the universal ribosomal protein uL30 family. Component of the large ribosomal subunit (LSU). Mature yeast ribosomes consist of a small (40S) and a large (60S) subunit. The 40S small subunit contains 1 molecule of ribosomal RNA (18S rRNA) and at least 33 different proteins. The large 60S subunit contains 3 rRNA molecules (25S, 5.8S and 5S rRNA) and at least 46 different proteins.

The protein resides in the cytoplasm. It is found in the nucleus. Its subcellular location is the nucleolus. Its function is as follows. Component of the ribosome, a large ribonucleoprotein complex responsible for the synthesis of proteins in the cell. The small ribosomal subunit (SSU) binds messenger RNAs (mRNAs) and translates the encoded message by selecting cognate aminoacyl-transfer RNA (tRNA) molecules. The large subunit (LSU) contains the ribosomal catalytic site termed the peptidyl transferase center (PTC), which catalyzes the formation of peptide bonds, thereby polymerizing the amino acids delivered by tRNAs into a polypeptide chain. The nascent polypeptides leave the ribosome through a tunnel in the LSU and interact with protein factors that function in enzymatic processing, targeting, and the membrane insertion of nascent chains at the exit of the ribosomal tunnel. In Schizosaccharomyces pombe (strain 972 / ATCC 24843) (Fission yeast), this protein is Large ribosomal subunit protein uL30B (rpl702).